The chain runs to 488 residues: Dihydrolipoyl dehydrogenase, mitochondrial (488 aa).

Residues 1–25 constitute a mitochondrion transit peptide; it reads MLRINRISNLRTFGQRFFSTEQQDV. FAD is bound by residues 52 to 61, K70, G134, and 163 to 165; these read EKRGKLGGTC and TGS. Residues C61 and C66 are joined by a disulfide bond. NAD(+) contacts are provided by residues 200–207, E223, V257, and G294; that span reads GGGVIGLE. FAD-binding positions include D335 and 341–344; that span reads MLAH. H467 serves as the catalytic Proton acceptor.

The protein belongs to the class-I pyridine nucleotide-disulfide oxidoreductase family. FAD serves as cofactor.

It localises to the mitochondrion matrix. It catalyses the reaction N(6)-[(R)-dihydrolipoyl]-L-lysyl-[protein] + NAD(+) = N(6)-[(R)-lipoyl]-L-lysyl-[protein] + NADH + H(+). This chain is Dihydrolipoyl dehydrogenase, mitochondrial (lpd), found in Dictyostelium discoideum (Social amoeba).